A 635-amino-acid polypeptide reads, in one-letter code: 1-deoxy-D-xylulose-5-phosphate synthase (635 aa).

Residues His-76 and 117-119 (GHS) each bind thiamine diphosphate. Asp-148 lines the Mg(2+) pocket. Thiamine diphosphate is bound by residues 149-150 (GA), Asn-177, Tyr-294, and Glu-379. Asn-177 is a binding site for Mg(2+).

This sequence belongs to the transketolase family. DXPS subfamily. Homodimer. Mg(2+) is required as a cofactor. Requires thiamine diphosphate as cofactor.

The catalysed reaction is D-glyceraldehyde 3-phosphate + pyruvate + H(+) = 1-deoxy-D-xylulose 5-phosphate + CO2. It functions in the pathway metabolic intermediate biosynthesis; 1-deoxy-D-xylulose 5-phosphate biosynthesis; 1-deoxy-D-xylulose 5-phosphate from D-glyceraldehyde 3-phosphate and pyruvate: step 1/1. Its function is as follows. Catalyzes the acyloin condensation reaction between C atoms 2 and 3 of pyruvate and glyceraldehyde 3-phosphate to yield 1-deoxy-D-xylulose-5-phosphate (DXP). The sequence is that of 1-deoxy-D-xylulose-5-phosphate synthase from Neisseria meningitidis serogroup C (strain 053442).